The primary structure comprises 270 residues: Shikimate dehydrogenase (NADP(+)) (270 aa).

Shikimate contacts are provided by residues 14–16 and Thr61; that span reads SKS. The Proton acceptor role is filled by Lys65. Shikimate is bound by residues Asn86 and Asp101. NADP(+) contacts are provided by residues 126–130, 150–155, and Met213; these read GAGGA and NRTVSK. Tyr215 lines the shikimate pocket. An NADP(+)-binding site is contributed by Gly237.

It belongs to the shikimate dehydrogenase family. As to quaternary structure, homodimer.

The enzyme catalyses shikimate + NADP(+) = 3-dehydroshikimate + NADPH + H(+). The protein operates within metabolic intermediate biosynthesis; chorismate biosynthesis; chorismate from D-erythrose 4-phosphate and phosphoenolpyruvate: step 4/7. Its function is as follows. Involved in the biosynthesis of the chorismate, which leads to the biosynthesis of aromatic amino acids. Catalyzes the reversible NADPH linked reduction of 3-dehydroshikimate (DHSA) to yield shikimate (SA). The polypeptide is Shikimate dehydrogenase (NADP(+)) (Hahella chejuensis (strain KCTC 2396)).